Here is a 600-residue protein sequence, read N- to C-terminus: Elongation factor 4 (600 aa).

The tr-type G domain maps to 4–186 (SKIRNFSIIA…AIVNKIPAPY (183 aa)). GTP contacts are provided by residues 16–21 (DHGKST) and 133–136 (NKVD).

Belongs to the TRAFAC class translation factor GTPase superfamily. Classic translation factor GTPase family. LepA subfamily.

It is found in the cell membrane. The catalysed reaction is GTP + H2O = GDP + phosphate + H(+). In terms of biological role, required for accurate and efficient protein synthesis under certain stress conditions. May act as a fidelity factor of the translation reaction, by catalyzing a one-codon backward translocation of tRNAs on improperly translocated ribosomes. Back-translocation proceeds from a post-translocation (POST) complex to a pre-translocation (PRE) complex, thus giving elongation factor G a second chance to translocate the tRNAs correctly. Binds to ribosomes in a GTP-dependent manner. In Mesoplasma florum (strain ATCC 33453 / NBRC 100688 / NCTC 11704 / L1) (Acholeplasma florum), this protein is Elongation factor 4.